The following is a 409-amino-acid chain: Na(+)-translocating NADH-quinone reductase subunit F (409 aa).

A helical transmembrane segment spans residues 5–25 (FIFGIIAFTALVLVLAVIILF). Positions 34-128 (GDITISINDD…SMDVELPEEI (95 aa)) constitute a 2Fe-2S ferredoxin-type domain. Residues C71, C77, C80, and C112 each coordinate [2Fe-2S] cluster. The 141-residue stretch at 131-271 (VKKWECTVIS…SGPFGEFFAK (141 aa)) folds into the FAD-binding FR-type domain.

It belongs to the NqrF family. As to quaternary structure, composed of six subunits; NqrA, NqrB, NqrC, NqrD, NqrE and NqrF. [2Fe-2S] cluster serves as cofactor. FAD is required as a cofactor.

The protein localises to the cell inner membrane. The enzyme catalyses a ubiquinone + n Na(+)(in) + NADH + H(+) = a ubiquinol + n Na(+)(out) + NAD(+). Functionally, NQR complex catalyzes the reduction of ubiquinone-1 to ubiquinol by two successive reactions, coupled with the transport of Na(+) ions from the cytoplasm to the periplasm. The first step is catalyzed by NqrF, which accepts electrons from NADH and reduces ubiquinone-1 to ubisemiquinone by a one-electron transfer pathway. This chain is Na(+)-translocating NADH-quinone reductase subunit F, found in Haemophilus ducreyi (strain 35000HP / ATCC 700724).